A 209-amino-acid polypeptide reads, in one-letter code: Imidazole glycerol phosphate synthase subunit HisH (209 aa).

The Glutamine amidotransferase type-1 domain occupies 1–205 (MIAIIDYGMG…KGVVETWKSS (205 aa)). Catalysis depends on Cys79, which acts as the Nucleophile. Active-site residues include His180 and Glu182.

As to quaternary structure, heterodimer of HisH and HisF.

It is found in the cytoplasm. The enzyme catalyses 5-[(5-phospho-1-deoxy-D-ribulos-1-ylimino)methylamino]-1-(5-phospho-beta-D-ribosyl)imidazole-4-carboxamide + L-glutamine = D-erythro-1-(imidazol-4-yl)glycerol 3-phosphate + 5-amino-1-(5-phospho-beta-D-ribosyl)imidazole-4-carboxamide + L-glutamate + H(+). It carries out the reaction L-glutamine + H2O = L-glutamate + NH4(+). It participates in amino-acid biosynthesis; L-histidine biosynthesis; L-histidine from 5-phospho-alpha-D-ribose 1-diphosphate: step 5/9. Its function is as follows. IGPS catalyzes the conversion of PRFAR and glutamine to IGP, AICAR and glutamate. The HisH subunit catalyzes the hydrolysis of glutamine to glutamate and ammonia as part of the synthesis of IGP and AICAR. The resulting ammonia molecule is channeled to the active site of HisF. The protein is Imidazole glycerol phosphate synthase subunit HisH of Bacillus anthracis (strain A0248).